A 192-amino-acid polypeptide reads, in one-letter code: Adenylate kinase (192 aa).

10 to 18 (GVPGVGGTT) is an ATP binding site.

This sequence belongs to the archaeal adenylate kinase family. Monomer.

Its subcellular location is the cytoplasm. It catalyses the reaction AMP + ATP = 2 ADP. The chain is Adenylate kinase from Methanococcus maripaludis (strain C7 / ATCC BAA-1331).